A 380-amino-acid chain; its full sequence is Cytochrome b (380 aa).

Transmembrane regions (helical) follow at residues 34 to 54, 78 to 99, 114 to 134, and 179 to 199; these read FGSL…LLAM, WLIR…YLHI, WNTG…GYVL, and FFAL…IHLT. Heme b-binding residues include His84 and His98. 2 residues coordinate heme b: His183 and His197. Residue His202 participates in a ubiquinone binding. A run of 4 helical transmembrane segments spans residues 227–247, 289–309, 321–341, and 348–368; these read LKDF…ALFT, LGGV…PFLH, LSQT…WIGS, and FITI…ILFP.

The protein belongs to the cytochrome b family. The cytochrome bc1 complex contains 11 subunits: 3 respiratory subunits (MT-CYB, CYC1 and UQCRFS1), 2 core proteins (UQCRC1 and UQCRC2) and 6 low-molecular weight proteins (UQCRH/QCR6, UQCRB/QCR7, UQCRQ/QCR8, UQCR10/QCR9, UQCR11/QCR10 and a cleavage product of UQCRFS1). This cytochrome bc1 complex then forms a dimer. Heme b is required as a cofactor.

Its subcellular location is the mitochondrion inner membrane. In terms of biological role, component of the ubiquinol-cytochrome c reductase complex (complex III or cytochrome b-c1 complex) that is part of the mitochondrial respiratory chain. The b-c1 complex mediates electron transfer from ubiquinol to cytochrome c. Contributes to the generation of a proton gradient across the mitochondrial membrane that is then used for ATP synthesis. This Coracias caudatus (Lilac-breasted roller) protein is Cytochrome b (MT-CYB).